We begin with the raw amino-acid sequence, 75 residues long: MGMSKSIKVILSLALVVFLALAATKVEATRYITYPAIDRGDHAVHCDKAHPNTCKKKEANPYQRGCEKINRCRGG.

A signal peptide spans 1-28; the sequence is MGMSKSIKVILSLALVVFLALAATKVEA. 2 disulfides stabilise this stretch: Cys46–Cys54 and Cys66–Cys72.

This sequence belongs to the plant rapid alkalinization factor (RALF) family.

The protein resides in the secreted. Its function is as follows. Cell signaling peptide that may regulate plant stress, growth, and development. Mediates a rapid alkalinization of extracellular space by mediating a transient increase in the cytoplasmic Ca(2+) concentration leading to a calcium-dependent signaling events through a cell surface receptor and a concomitant activation of some intracellular mitogen-activated protein kinases. This is Protein RALF-like 9 (RALFL9) from Arabidopsis thaliana (Mouse-ear cress).